Consider the following 445-residue polypeptide: Probable multidrug resistance protein YpnP (445 aa).

The next 12 helical transmembrane spans lie at 15 to 35 (LVLF…FQFI), 49 to 69 (LGAA…ILGL), 95 to 115 (AFVV…FFLS), 136 to 156 (LQIQ…STVL), 168 to 188 (FIAF…SVFR), 194 to 214 (AAYS…FYVI), 240 to 260 (IPAG…MSVV), 277 to 297 (LDSI…SMAG), 314 to 334 (LGVI…WVFG), 355 to 375 (LKWI…NGIV), 384 to 404 (VLVL…ALFS), and 411 to 431 (GIGL…FLYY).

Belongs to the multi antimicrobial extrusion (MATE) (TC 2.A.66.1) family.

It is found in the cell membrane. The protein is Probable multidrug resistance protein YpnP (ypnP) of Bacillus subtilis (strain 168).